The chain runs to 205 residues: Large ribosomal subunit protein uL3c (205 aa).

The tract at residues 127 to 153 (HFSRGPMSHGSKNHRQPGSIGAGTTPG) is disordered.

It belongs to the universal ribosomal protein uL3 family. As to quaternary structure, part of the 50S ribosomal subunit.

The protein localises to the plastid. It is found in the chloroplast. Its function is as follows. One of the primary rRNA binding proteins, it binds directly near the 3'-end of the 23S rRNA, where it nucleates assembly of the 50S subunit. In Porphyra purpurea (Red seaweed), this protein is Large ribosomal subunit protein uL3c (rpl3).